Consider the following 396-residue polypeptide: Probable glucan endo-1,6-beta-glucosidase B (396 aa).

The first 17 residues, 1 to 17, serve as a signal peptide directing secretion; that stretch reads MIRRLAAFSALSGLATA. N30 carries an N-linked (GlcNAc...) asparagine glycan. The Proton donor role is filled by E219. A glycan (N-linked (GlcNAc...) asparagine) is linked at N272. Residue E320 is the Nucleophile of the active site.

The protein belongs to the glycosyl hydrolase 5 (cellulase A) family.

It localises to the secreted. The catalysed reaction is Random hydrolysis of (1-&gt;6)-linkages in (1-&gt;6)-beta-D-glucans.. Functionally, beta-glucanases participate in the metabolism of beta-glucan, the main structural component of the cell wall. Acts on lutean, pustulan and 1,6-oligo-beta-D-glucosides. The sequence is that of Probable glucan endo-1,6-beta-glucosidase B (exgB) from Aspergillus fumigatus (strain ATCC MYA-4609 / CBS 101355 / FGSC A1100 / Af293) (Neosartorya fumigata).